A 421-amino-acid polypeptide reads, in one-letter code: D-amino acid dehydrogenase (421 aa).

3–17 (VIVLGSGVIGVASAY) contributes to the FAD binding site.

This sequence belongs to the DadA oxidoreductase family. The cofactor is FAD.

The enzyme catalyses a D-alpha-amino acid + A + H2O = a 2-oxocarboxylate + AH2 + NH4(+). It functions in the pathway amino-acid degradation; D-alanine degradation; NH(3) and pyruvate from D-alanine: step 1/1. Its function is as follows. Oxidative deamination of D-amino acids. The sequence is that of D-amino acid dehydrogenase from Acinetobacter baumannii (strain AB307-0294).